Here is a 226-residue protein sequence, read N- to C-terminus: Large ribosomal subunit protein uL1 (226 aa).

This sequence belongs to the universal ribosomal protein uL1 family. Part of the 50S ribosomal subunit.

Functionally, binds directly to 23S rRNA. The L1 stalk is quite mobile in the ribosome, and is involved in E site tRNA release. In terms of biological role, protein L1 is also a translational repressor protein, it controls the translation of the L11 operon by binding to its mRNA. In Buchnera aphidicola subsp. Cinara cedri (strain Cc), this protein is Large ribosomal subunit protein uL1.